Consider the following 57-residue polypeptide: U-Asilidin(1)-Mar2a (57 aa).

The first 24 residues, 1-24 (MAPLLKLNILLLIVLICFTFHANA), serve as a signal peptide directing secretion. 3 cysteine pairs are disulfide-bonded: Cys28-Cys44, Cys35-Cys48, and Cys43-Cys53.

This sequence belongs to the asilidin-1 family. Expressed by the venom gland. Exclusively expressed in the venom thoracic glands (and not in body tissues).

It is found in the secreted. Functionally, may act as a neurotoxin. In Machimus arthriticus (Breck robberfly), this protein is U-Asilidin(1)-Mar2a.